The following is a 115-amino-acid chain: Nascent polypeptide-associated complex protein (115 aa).

Residues 6–72 (PMNPKQLKKL…SEEEKAIINI (67 aa)) enclose the NAC-A/B domain.

It belongs to the NAC-alpha family. As to quaternary structure, homodimer. Interacts with the ribosome. Binds ribosomal RNA.

Contacts the emerging nascent chain on the ribosome. In Pyrococcus horikoshii (strain ATCC 700860 / DSM 12428 / JCM 9974 / NBRC 100139 / OT-3), this protein is Nascent polypeptide-associated complex protein.